An 88-amino-acid polypeptide reads, in one-letter code: MRLFISLPVLIVVLAMALEGPAPAQATPDLSSTFENLPDKLKEFGNTLEDKARAAIEHIKQKEFLTKTRTWISETFGKMKEKIKTTFA.

An N-terminal signal peptide occupies residues 1–26 (MRLFISLPVLIVVLAMALEGPAPAQA).

The protein belongs to the apolipoprotein C1 family.

It is found in the secreted. Functionally, inhibitor of lipoprotein binding to the low density lipoprotein (LDL) receptor, LDL receptor-related protein, and very low density lipoprotein (VLDL) receptor. Associates with high density lipoproteins (HDL) and the triacylglycerol-rich lipoproteins in the plasma and makes up about 10% of the protein of the VLDL and 2% of that of HDL. Appears to interfere directly with fatty acid uptake and is also the major plasma inhibitor of cholesteryl ester transfer protein (CETP). Modulates the interaction of APOE with beta-migrating VLDL and inhibits binding of beta-VLDL to the LDL receptor-related protein. Binds free fatty acids and reduces their intracellular esterification. This is Apolipoprotein C-I (APOC1) from Myodes glareolus (Bank vole).